The sequence spans 183 residues: ATP synthase subunit b, chloroplastic (183 aa).

Residues 27–49 form a helical membrane-spanning segment; it reads LATNPINLSVVLGVLIFFGKGVL.

This sequence belongs to the ATPase B chain family. In terms of assembly, F-type ATPases have 2 components, F(1) - the catalytic core - and F(0) - the membrane proton channel. F(1) has five subunits: alpha(3), beta(3), gamma(1), delta(1), epsilon(1). F(0) has four main subunits: a(1), b(1), b'(1) and c(10-14). The alpha and beta chains form an alternating ring which encloses part of the gamma chain. F(1) is attached to F(0) by a central stalk formed by the gamma and epsilon chains, while a peripheral stalk is formed by the delta, b and b' chains.

It is found in the plastid. The protein resides in the chloroplast thylakoid membrane. F(1)F(0) ATP synthase produces ATP from ADP in the presence of a proton or sodium gradient. F-type ATPases consist of two structural domains, F(1) containing the extramembraneous catalytic core and F(0) containing the membrane proton channel, linked together by a central stalk and a peripheral stalk. During catalysis, ATP synthesis in the catalytic domain of F(1) is coupled via a rotary mechanism of the central stalk subunits to proton translocation. In terms of biological role, component of the F(0) channel, it forms part of the peripheral stalk, linking F(1) to F(0). The sequence is that of ATP synthase subunit b, chloroplastic from Ranunculus macranthus (Large buttercup).